Here is an 822-residue protein sequence, read N- to C-terminus: Phenylalanine--tRNA ligase beta subunit (822 aa).

In terms of domain architecture, tRNA-binding spans 39–150 (ADRLVGFRTA…ETAPIGESYA (112 aa)). The 104-residue stretch at 399–502 (DWKRTARLRF…RLYGLDNVPA (104 aa)) folds into the B5 domain. Mg(2+) contacts are provided by Asp-486, Glu-489, and Glu-490. Residues 728-821 (SPLQPVRRDF…VLKATGAVLR (94 aa)) form the FDX-ACB domain.

This sequence belongs to the phenylalanyl-tRNA synthetase beta subunit family. Type 1 subfamily. As to quaternary structure, tetramer of two alpha and two beta subunits. It depends on Mg(2+) as a cofactor.

The protein localises to the cytoplasm. It carries out the reaction tRNA(Phe) + L-phenylalanine + ATP = L-phenylalanyl-tRNA(Phe) + AMP + diphosphate + H(+). This chain is Phenylalanine--tRNA ligase beta subunit, found in Gluconobacter oxydans (strain 621H) (Gluconobacter suboxydans).